The sequence spans 418 residues: Cell division protein FtsA (418 aa).

It belongs to the FtsA/MreB family. Self-interacts. Interacts with FtsZ.

The protein resides in the cell inner membrane. Functionally, cell division protein that is involved in the assembly of the Z ring. May serve as a membrane anchor for the Z ring. The sequence is that of Cell division protein FtsA from Buchnera aphidicola subsp. Schizaphis graminum (strain Sg).